The chain runs to 783 residues: Probable phosphoketolase (783 aa).

Belongs to the XFP family. Requires thiamine diphosphate as cofactor.

The chain is Probable phosphoketolase from Rhodopseudomonas palustris (strain TIE-1).